We begin with the raw amino-acid sequence, 82 residues long: RNA-binding protein GTNG_0100 (82 aa).

This sequence belongs to the eukaryotic ribosomal protein eL8 family.

The chain is RNA-binding protein GTNG_0100 from Geobacillus thermodenitrificans (strain NG80-2).